The chain runs to 301 residues: Bifunctional protein FolD (301 aa).

NADP(+) is bound by residues 166 to 168, serine 191, and isoleucine 232; that span reads GKS.

It belongs to the tetrahydrofolate dehydrogenase/cyclohydrolase family. As to quaternary structure, homodimer.

It catalyses the reaction (6R)-5,10-methylene-5,6,7,8-tetrahydrofolate + NADP(+) = (6R)-5,10-methenyltetrahydrofolate + NADPH. It carries out the reaction (6R)-5,10-methenyltetrahydrofolate + H2O = (6R)-10-formyltetrahydrofolate + H(+). It participates in one-carbon metabolism; tetrahydrofolate interconversion. In terms of biological role, catalyzes the oxidation of 5,10-methylenetetrahydrofolate to 5,10-methenyltetrahydrofolate and then the hydrolysis of 5,10-methenyltetrahydrofolate to 10-formyltetrahydrofolate. The protein is Bifunctional protein FolD of Orientia tsutsugamushi (strain Boryong) (Rickettsia tsutsugamushi).